Reading from the N-terminus, the 564-residue chain is uncharacterized protein (564 aa).

The first 21 residues, 1-21 (MRRIGAITALSLPVLLSLLYS), serve as a signal peptide directing secretion. Cys-22 carries N-palmitoyl cysteine lipidation. Residue Cys-22 is the site of S-diacylglycerol cysteine attachment.

The protein localises to the cell membrane. This is an uncharacterized protein from Aquifex aeolicus (strain VF5).